A 731-amino-acid polypeptide reads, in one-letter code: DNA ligase (731 aa).

Residues 47 to 51 (DAEYD), 96 to 97 (SI), and Glu-133 contribute to the NAD(+) site. Lys-135 functions as the N6-AMP-lysine intermediate in the catalytic mechanism. Arg-156, Glu-192, Lys-313, and Lys-337 together coordinate NAD(+). Zn(2+)-binding residues include Cys-462, Cys-465, Cys-480, and Cys-486. The 87-residue stretch at 645–731 (AATLPLAGMT…RGTPPNAGGA (87 aa)) folds into the BRCT domain.

The protein belongs to the NAD-dependent DNA ligase family. LigA subfamily. Mg(2+) is required as a cofactor. Mn(2+) serves as cofactor.

It carries out the reaction NAD(+) + (deoxyribonucleotide)n-3'-hydroxyl + 5'-phospho-(deoxyribonucleotide)m = (deoxyribonucleotide)n+m + AMP + beta-nicotinamide D-nucleotide.. DNA ligase that catalyzes the formation of phosphodiester linkages between 5'-phosphoryl and 3'-hydroxyl groups in double-stranded DNA using NAD as a coenzyme and as the energy source for the reaction. It is essential for DNA replication and repair of damaged DNA. This Acidovorax sp. (strain JS42) protein is DNA ligase.